A 660-amino-acid polypeptide reads, in one-letter code: Bifunctional polymyxin resistance protein ArnA (660 aa).

A formyltransferase ArnAFT region spans residues Met1–Ile304. His104 functions as the Proton donor; for formyltransferase activity in the catalytic mechanism. (6R)-10-formyltetrahydrofolate contacts are provided by residues Arg114 and Val136–Asp140. Positions Arg314–Ala660 are dehydrogenase ArnADH. Residues Asp347 and Asp368 to Ile369 contribute to the NAD(+) site. UDP-alpha-D-glucuronate is bound by residues Ala393, Tyr398, and Thr432–Ser433. Residue Glu434 is the Proton acceptor; for decarboxylase activity of the active site. Residues Arg460, Asn492, Lys526–Arg535, and Tyr613 each bind UDP-alpha-D-glucuronate. The active-site Proton donor; for decarboxylase activity is the Arg619.

It in the N-terminal section; belongs to the Fmt family. UDP-L-Ara4N formyltransferase subfamily. The protein in the C-terminal section; belongs to the NAD(P)-dependent epimerase/dehydratase family. UDP-glucuronic acid decarboxylase subfamily. In terms of assembly, homohexamer, formed by a dimer of trimers.

It catalyses the reaction UDP-alpha-D-glucuronate + NAD(+) = UDP-beta-L-threo-pentopyranos-4-ulose + CO2 + NADH. The catalysed reaction is UDP-4-amino-4-deoxy-beta-L-arabinose + (6R)-10-formyltetrahydrofolate = UDP-4-deoxy-4-formamido-beta-L-arabinose + (6S)-5,6,7,8-tetrahydrofolate + H(+). The protein operates within nucleotide-sugar biosynthesis; UDP-4-deoxy-4-formamido-beta-L-arabinose biosynthesis; UDP-4-deoxy-4-formamido-beta-L-arabinose from UDP-alpha-D-glucuronate: step 1/3. It participates in nucleotide-sugar biosynthesis; UDP-4-deoxy-4-formamido-beta-L-arabinose biosynthesis; UDP-4-deoxy-4-formamido-beta-L-arabinose from UDP-alpha-D-glucuronate: step 3/3. It functions in the pathway bacterial outer membrane biogenesis; lipopolysaccharide biosynthesis. Its function is as follows. Bifunctional enzyme that catalyzes the oxidative decarboxylation of UDP-glucuronic acid (UDP-GlcUA) to UDP-4-keto-arabinose (UDP-Ara4O) and the addition of a formyl group to UDP-4-amino-4-deoxy-L-arabinose (UDP-L-Ara4N) to form UDP-L-4-formamido-arabinose (UDP-L-Ara4FN). The modified arabinose is attached to lipid A and is required for resistance to polymyxin and cationic antimicrobial peptides. The chain is Bifunctional polymyxin resistance protein ArnA from Enterobacter sp. (strain 638).